The following is a 463-amino-acid chain: tRNA (guanine(10)-N(2))-methyltransferase TRMT11 (463 aa).

Position 2 is an N-acetylalanine (Ala-2).

Belongs to the class I-like SAM-binding methyltransferase superfamily. TRM11 methyltransferase family. As to quaternary structure, part of the heterodimeric TRMT11-TRM112 methyltransferase complex; this complex forms an active tRNA methyltransferase, where TRMT112 acts as an activator of the catalytic subunit TRMT11.

Its subcellular location is the cytoplasm. It catalyses the reaction guanosine(10) in tRNA + S-adenosyl-L-methionine = N(2)-methylguanosine(10) in tRNA + S-adenosyl-L-homocysteine + H(+). Catalytic subunit of the TRMT11-TRM112 methyltransferase complex, that specifically mediates the S-adenosyl-L-methionine-dependent N(2)-methylation of guanosine nucleotide at position 10 (m2G10) in tRNAs. This is one of the major tRNA (guanine-N(2))-methyltransferases. The chain is tRNA (guanine(10)-N(2))-methyltransferase TRMT11 from Homo sapiens (Human).